The sequence spans 213 residues: Ethylene-responsive transcription factor WIN1 (213 aa).

Positions 15-72 (KFRGVRQRHWGSWVSEIRHPLLKRRVWLGTFETAEEAARAYDEAAVLMSGRNAKTNFP) form a DNA-binding region, AP2/ERF. A compositionally biased stretch (polar residues) spans 70–80 (NFPIQRSSTGE). Disordered regions lie at residues 70 to 99 (NFPIQRSSTGEPTPAAGRDARSNFSSGSST) and 159 to 213 (ASTD…RFII). Low complexity predominate over residues 159 to 174 (ASTDAASQSTSATTAP).

It belongs to the AP2/ERF transcription factor family. ERF subfamily. As to expression, mostly expressed in roots, stems and anthers, and, to a lower extent, in leaves, seeds and silks.

The protein localises to the nucleus. In terms of biological role, promotes cuticle formation by inducing the expression of enzymes involved in wax biosynthesis, particularly promoting very-long-chain waxes formation. Confers drought resistance. Acts as a transcriptional activator binding directly to promoter regions of CER2, CER3.2 and KCS1, wax biosynthesis-related genes. Binds to the GCC-box pathogenesis-related promoter element. May be involved in the regulation of gene expression by stress factors and by components of stress signal transduction pathways. The protein is Ethylene-responsive transcription factor WIN1 of Zea mays (Maize).